The sequence spans 363 residues: Ankyrin repeat domain-containing protein 40 (363 aa).

The residue at position 1 (methionine 1) is an N-acetylmethionine. ANK repeat units follow at residues 9–38 and 43–72; these read EQQERLREAAALGDIREVQKLVESGVDVNS and NGWTCLHWACKRNHGQVVSYLLQSGADREI. Residues 135 to 167 form a disordered region; sequence DSTQLQNGGPSPPPVSPPADSSPPLLPPTETPL. A compositionally biased stretch (pro residues) spans 144 to 164; the sequence is PSPPPVSPPADSSPPLLPPTE. A Phosphoserine modification is found at serine 176.

The chain is Ankyrin repeat domain-containing protein 40 (Ankrd40) from Mus musculus (Mouse).